A 199-amino-acid chain; its full sequence is NAD(P)H dehydrogenase (quinone) (199 aa).

The 187-residue stretch at 4–190 (VLVLYYSAYG…AGARYQGQVI (187 aa)) folds into the Flavodoxin-like domain. FMN-binding positions include 10–15 (SAYGHI) and 78–80 (TRF). Tyrosine 12 provides a ligand contact to NAD(+). Tryptophan 98 lines the substrate pocket. FMN is bound by residues 113 to 119 (STATQHG) and histidine 134.

Belongs to the WrbA family. It depends on FMN as a cofactor.

The enzyme catalyses a quinone + NADH + H(+) = a quinol + NAD(+). The catalysed reaction is a quinone + NADPH + H(+) = a quinol + NADP(+). This is NAD(P)H dehydrogenase (quinone) from Rhodopseudomonas palustris (strain BisA53).